A 191-amino-acid chain; its full sequence is UPF0312 protein SO_3370 (191 aa).

The N-terminal stretch at 1-22 is a signal peptide; the sequence is MKKQLFSALIGASLFAPMAVSA.

The protein belongs to the UPF0312 family. Type 1 subfamily.

The protein resides in the periplasm. This chain is UPF0312 protein SO_3370, found in Shewanella oneidensis (strain ATCC 700550 / JCM 31522 / CIP 106686 / LMG 19005 / NCIMB 14063 / MR-1).